The sequence spans 305 residues: Translation initiation factor eIF2B subunit alpha (305 aa).

N6-acetyllysine is present on K35.

The protein belongs to the eIF-2B alpha/beta/delta subunits family. Component of the translation initiation factor 2B (eIF2B) complex which is a heterodecamer of two sets of five different subunits: alpha, beta, gamma, delta and epsilon. Subunits alpha, beta and delta comprise a regulatory subcomplex and subunits epsilon and gamma comprise a catalytic subcomplex. Within the complex, the hexameric regulatory complex resides at the center, with the two heterodimeric catalytic subcomplexes bound on opposite sides.

It is found in the cytoplasm. Its subcellular location is the cytosol. Activated by the chemical integrated stress response (ISR) inhibitor ISRIB which stimulates guanine nucleotide exchange factor activity for both phosphorylated and unphosphorylated eIF2. Its function is as follows. Acts as a component of the translation initiation factor 2B (eIF2B) complex, which catalyzes the exchange of GDP for GTP on eukaryotic initiation factor 2 (eIF2) gamma subunit. Its guanine nucleotide exchange factor activity is repressed when bound to eIF2 complex phosphorylated on the alpha subunit, thereby limiting the amount of methionyl-initiator methionine tRNA available to the ribosome and consequently global translation is repressed. The polypeptide is Translation initiation factor eIF2B subunit alpha (EIF2B1) (Pongo abelii (Sumatran orangutan)).